Here is a 266-residue protein sequence, read N- to C-terminus: Small ribosomal subunit protein uS3 (266 aa).

Residues 39–107 form the KH type-2 domain; the sequence is VREYLKKKLK…PVHVNIEEIR (69 aa). Residues 218–266 form a disordered region; sequence EVAEDKRPRRNARPGDRRPRRDGEGGAPGARRGAPRRGAGKPEDGKTGE. 2 stretches are compositionally biased toward basic and acidic residues: residues 230-241 and 257-266; these read RPGDRRPRRDGE and GKPEDGKTGE.

Belongs to the universal ribosomal protein uS3 family. In terms of assembly, part of the 30S ribosomal subunit. Forms a tight complex with proteins S10 and S14.

Its function is as follows. Binds the lower part of the 30S subunit head. Binds mRNA in the 70S ribosome, positioning it for translation. This Burkholderia multivorans (strain ATCC 17616 / 249) protein is Small ribosomal subunit protein uS3.